The sequence spans 490 residues: UDP-N-acetylmuramate--L-alanine ligase (490 aa).

Position 126–132 (126–132 (GTHGKTT)) interacts with ATP.

This sequence belongs to the MurCDEF family.

The protein resides in the cytoplasm. It carries out the reaction UDP-N-acetyl-alpha-D-muramate + L-alanine + ATP = UDP-N-acetyl-alpha-D-muramoyl-L-alanine + ADP + phosphate + H(+). The protein operates within cell wall biogenesis; peptidoglycan biosynthesis. In terms of biological role, cell wall formation. The sequence is that of UDP-N-acetylmuramate--L-alanine ligase from Sodalis glossinidius (strain morsitans).